We begin with the raw amino-acid sequence, 260 residues long: Hydroxyacylglutathione hydrolase (260 aa).

The Zn(2+) site is built by H61, H63, D65, H66, H119, D138, and H176.

The protein belongs to the metallo-beta-lactamase superfamily. Glyoxalase II family. Monomer. Zn(2+) serves as cofactor.

It carries out the reaction an S-(2-hydroxyacyl)glutathione + H2O = a 2-hydroxy carboxylate + glutathione + H(+). It functions in the pathway secondary metabolite metabolism; methylglyoxal degradation; (R)-lactate from methylglyoxal: step 2/2. Its function is as follows. Thiolesterase that catalyzes the hydrolysis of S-D-lactoyl-glutathione to form glutathione and D-lactic acid. The chain is Hydroxyacylglutathione hydrolase from Brucella anthropi (strain ATCC 49188 / DSM 6882 / CCUG 24695 / JCM 21032 / LMG 3331 / NBRC 15819 / NCTC 12168 / Alc 37) (Ochrobactrum anthropi).